A 1055-amino-acid polypeptide reads, in one-letter code: Error-prone DNA polymerase (1055 aa).

It belongs to the DNA polymerase type-C family. DnaE2 subfamily.

The protein resides in the cytoplasm. It carries out the reaction DNA(n) + a 2'-deoxyribonucleoside 5'-triphosphate = DNA(n+1) + diphosphate. Its function is as follows. DNA polymerase involved in damage-induced mutagenesis and translesion synthesis (TLS). It is not the major replicative DNA polymerase. The chain is Error-prone DNA polymerase from Corynebacterium glutamicum (strain ATCC 13032 / DSM 20300 / JCM 1318 / BCRC 11384 / CCUG 27702 / LMG 3730 / NBRC 12168 / NCIMB 10025 / NRRL B-2784 / 534).